Consider the following 458-residue polypeptide: ATP synthase subunit beta (458 aa).

148 to 155 (GGAGVGKT) lines the ATP pocket.

It belongs to the ATPase alpha/beta chains family. F-type ATPases have 2 components, CF(1) - the catalytic core - and CF(0) - the membrane proton channel. CF(1) has five subunits: alpha(3), beta(3), gamma(1), delta(1), epsilon(1). CF(0) has three main subunits: a(1), b(2) and c(9-12). The alpha and beta chains form an alternating ring which encloses part of the gamma chain. CF(1) is attached to CF(0) by a central stalk formed by the gamma and epsilon chains, while a peripheral stalk is formed by the delta and b chains.

It is found in the cell inner membrane. It catalyses the reaction ATP + H2O + 4 H(+)(in) = ADP + phosphate + 5 H(+)(out). In terms of biological role, produces ATP from ADP in the presence of a proton gradient across the membrane. The catalytic sites are hosted primarily by the beta subunits. In Pseudomonas putida (strain GB-1), this protein is ATP synthase subunit beta.